Here is a 292-residue protein sequence, read N- to C-terminus: Calponin-1 (292 aa).

Positions 28-131 (PQTERQLRVW…STLIALASQA (104 aa)) constitute a Calponin-homology (CH) domain. 3 Calponin-like repeats span residues 164 to 189 (IGLQMGTNKFASQQGMTAYGTRRHLY), 204 to 229 (ISLQMGTNKGASQAGMTAPGTKRQIF), and 243 to 268 (IGLQMGSNKGASQQGMTVYGLPRQVY). Residue T170 is modified to Phosphothreonine; by ROCK2. Residue S175 is modified to Phosphoserine; by PKC, CaMK2 and ROCK2. T180 and T184 each carry phosphothreonine; by ROCK2. Phosphothreonine; by PKC and CaMK2 is present on T184. The interval 185-193 (RRHLYDPKL) is calmodulin-binding. A Phosphothreonine; by ROCK2 modification is found at T259.

This sequence belongs to the calponin family. In terms of processing, phosphorylation by PKC or CaM kinase II reduces the binding of calponin to F-actin and tropomyosin. As to expression, smooth muscle, and tissues containing significant amounts of smooth muscle.

In terms of biological role, thin filament-associated protein that is implicated in the regulation and modulation of smooth muscle contraction. It is capable of binding to actin, calmodulin and tropomyosin. The interaction of calponin with actin inhibits the actomyosin Mg-ATPase activity. The protein is Calponin-1 (CNN1) of Gallus gallus (Chicken).